Here is an 806-residue protein sequence, read N- to C-terminus: MGDTMVEPVPAKLSDPTLVLRGNGGSPLCVITEGVGEAQMVIDPDVAEKACQDVLDKVKLIRGSSAESLDKIDGSDTGDGGSLANGDAGPRHSESCGPPVSASRITEEEESLIDINSVKSARRRQKNNSAKQSWLLRLFECKLFDVSMAISYLYNSKEPGVQAYIGNRLFCFRYEDVDFYLPQLLNMYIHMDEDVGDAIKPYVVHRCRQSINFSLQCAWLLGAYSSDMHISTQRHSRGTKLRKLILSDELKPAHKKREIPPLSLAPDTGLSPSKRTHQRSKSDATVSISLSSNLKRTSSNPKVENDDEPVRLAPEREFIKSLMAIGKRLATLPTKEQKTQRLISELSLLNHKLPARVWLPTAGFDHHVVRVPHTQAVVLNSKDKAPYLIYVEVLECENFETSLVPVRIPENRIRSTRSVENLPECGITHEQRASSFTTVPNYDNDDEAWSVDDIGELQVELPELHTNSCDNISQFSVDSITSQESKDPVFIAAGDIRRRLSEQLAHTPTTFRRDPEDPSAVALKEPWQEKVRRIREGSPYGHFPNWRLLSVIVKCGDDLRQELLAYQVLKQLQSIWESERVPLWIRPYKILVISADSGMIEPVVNAVSIHQVKKQSQLSLLDYFLQEHGSCTTEAFLTAQRNFVQSCAGYCLVCYLLQVKDRHNGNILLDAEGHIIHIDFGFILSSSPRNLGFETSAFKLTSEFVDVMGGLNGDMFNYYKMLMLQGLIAARKHMDRVVQIVEIMQQGSQLPCFHGSSTIRNLKERFHMNMTEEQLQVLVEQMVDGSMRSITTKLYDGFQYLTNGIM.

Residues 55–247 enclose the PIK helical domain; the sequence is LDKVKLIRGS…GTKLRKLILS (193 aa). Disordered regions lie at residues 69–104 and 253–310; these read LDKI…SASR and AHKK…DEPV. Over residues 283–302 the composition is skewed to polar residues; that stretch reads DATVSISLSSNLKRTSSNPK. Positions 525 to 791 constitute a PI3K/PI4K catalytic domain; sequence EPWQEKVRRI…MVDGSMRSIT (267 aa). Residues 531–537 form a G-loop region; the sequence is VRRIREG. The segment at 658–666 is catalytic loop; sequence QVKDRHNGN. An activation loop region spans residues 677 to 701; the sequence is HIDFGFILSSSPRNLGFETSAFKLT.

The protein belongs to the PI3/PI4-kinase family. Type III PI4K subfamily. Mg(2+) serves as cofactor. Requires Mn(2+) as cofactor.

It is found in the endomembrane system. It localises to the mitochondrion outer membrane. Its subcellular location is the rough endoplasmic reticulum membrane. The enzyme catalyses a 1,2-diacyl-sn-glycero-3-phospho-(1D-myo-inositol) + ATP = a 1,2-diacyl-sn-glycero-3-phospho-(1D-myo-inositol 4-phosphate) + ADP + H(+). Its function is as follows. Phosphorylates phosphatidylinositol (PI) in the first committed step in the production of the second messenger inositol-1,4,5,-trisphosphate (PIP). May play an important role in the inner ear development. This is Phosphatidylinositol 4-kinase beta (pi4kb) from Xenopus tropicalis (Western clawed frog).